Consider the following 262-residue polypeptide: Phosphomannomutase 1 (262 aa).

N-acetylalanine is present on alanine 2. Aspartate 19 functions as the Nucleophile in the catalytic mechanism. Mg(2+)-binding residues include aspartate 19 and aspartate 21. The Proton donor/acceptor role is filled by aspartate 21. Residues arginine 28, arginine 132, arginine 143, arginine 150, methionine 186, serine 188, and aspartate 190 each contribute to the alpha-D-mannose 1-phosphate site. Mg(2+) contacts are provided by asparagine 218, phenylalanine 230, aspartate 232, and threonine 235. At serine 242 the chain carries Phosphoserine.

Belongs to the eukaryotic PMM family. Homodimer. Mg(2+) is required as a cofactor. In terms of tissue distribution, strong expression in liver, heart, brain, and pancreas; lower expression in skeletal muscle.

The protein localises to the cytoplasm. The catalysed reaction is alpha-D-mannose 1-phosphate = D-mannose 6-phosphate. It participates in nucleotide-sugar biosynthesis; GDP-alpha-D-mannose biosynthesis; alpha-D-mannose 1-phosphate from D-fructose 6-phosphate: step 2/2. IMP, a metabolite whose concentration is elevated in anoxia, inhibits phosphomannomutase and phosphoglucomutase activities and strongly enhances glucose-1,6-bisphosphatase activity. Its function is as follows. Involved in the synthesis of the GDP-mannose and dolichol-phosphate-mannose required for a number of critical mannosyl transfer reactions. In addition, may be responsible for the degradation of glucose-1,6-bisphosphate in ischemic brain. This is Phosphomannomutase 1 (PMM1) from Homo sapiens (Human).